The primary structure comprises 264 residues: Thymidylate synthase (264 aa).

Position 21 (Arg-21) interacts with dUMP. His-51 provides a ligand contact to (6R)-5,10-methylene-5,6,7,8-tetrahydrofolate. 126–127 (RR) serves as a coordination point for dUMP. Cys-146 (nucleophile) is an active-site residue. DUMP-binding positions include 166-169 (RSCD), Asn-177, and 207-209 (HLY). Asp-169 is a binding site for (6R)-5,10-methylene-5,6,7,8-tetrahydrofolate. Ser-263 is a binding site for (6R)-5,10-methylene-5,6,7,8-tetrahydrofolate.

The protein belongs to the thymidylate synthase family. Bacterial-type ThyA subfamily. In terms of assembly, homodimer.

It localises to the cytoplasm. The catalysed reaction is dUMP + (6R)-5,10-methylene-5,6,7,8-tetrahydrofolate = 7,8-dihydrofolate + dTMP. Its pathway is pyrimidine metabolism; dTTP biosynthesis. Functionally, catalyzes the reductive methylation of 2'-deoxyuridine-5'-monophosphate (dUMP) to 2'-deoxythymidine-5'-monophosphate (dTMP) while utilizing 5,10-methylenetetrahydrofolate (mTHF) as the methyl donor and reductant in the reaction, yielding dihydrofolate (DHF) as a by-product. This enzymatic reaction provides an intracellular de novo source of dTMP, an essential precursor for DNA biosynthesis. In Buchnera aphidicola subsp. Acyrthosiphon pisum (strain APS) (Acyrthosiphon pisum symbiotic bacterium), this protein is Thymidylate synthase.